The following is a 686-amino-acid chain: Catalase-2 (686 aa).

Residues 1–27 (MSDDQNKRVNEHSKDEQLEQYRTDNSG) show a composition bias toward basic and acidic residues. The disordered stretch occupies residues 1 to 43 (MSDDQNKRVNEHSKDEQLEQYRTDNSGKKMTTNQGLRVSEDEH). Active-site residues include His78 and Asn151. Residue Tyr365 coordinates heme.

It belongs to the catalase family. HPII subfamily. Heme serves as cofactor.

The enzyme catalyses 2 H2O2 = O2 + 2 H2O. In terms of biological role, decomposes hydrogen peroxide into water and oxygen; serves to protect cells from the toxic effects of hydrogen peroxide. Involved in sporulation. In Bacillus subtilis (strain 168), this protein is Catalase-2 (katE).